Reading from the N-terminus, the 505-residue chain is ATP synthase subunit alpha (505 aa).

171–178 (GDRQTGKT) contributes to the ATP binding site.

It belongs to the ATPase alpha/beta chains family. F-type ATPases have 2 components, CF(1) - the catalytic core - and CF(0) - the membrane proton channel. CF(1) has five subunits: alpha(3), beta(3), gamma(1), delta(1), epsilon(1). CF(0) has three main subunits: a(1), b(2) and c(9-12). The alpha and beta chains form an alternating ring which encloses part of the gamma chain. CF(1) is attached to CF(0) by a central stalk formed by the gamma and epsilon chains, while a peripheral stalk is formed by the delta and b chains.

The protein resides in the cell inner membrane. The catalysed reaction is ATP + H2O + 4 H(+)(in) = ADP + phosphate + 5 H(+)(out). Produces ATP from ADP in the presence of a proton gradient across the membrane. The alpha chain is a regulatory subunit. This is ATP synthase subunit alpha from Aliarcobacter butzleri (strain RM4018) (Arcobacter butzleri).